The sequence spans 461 residues: UDP-glucosyltransferase 1 (461 aa).

It belongs to the UDP-glycosyltransferase family.

It functions in the pathway secondary metabolite biosynthesis. Functionally, UDP-glucosyltransferase; part of the pathway that mediates the biosynthesis of tenellin-type 2-pyridones, iron-chelating compounds involved in iron stress tolerance, competition with the natural competitor fungus Metarhizium robertsii and insect hosts infection. Targets the N-OH hydroxyl residue of 15-hydroxytellenin (15-HT) to produce pyridovericin-N-O-(beta-D-glucopyranoside) which is further methylated by the methyltransferase MT1 to yield pyridovericin-N-O-(4-O-methyl-beta-D-glucopyranoside) (PMGP). The pathway begins with the assembly of the polyketide-amino acid backbone by the hybrid PKS-NRPS tenS with the help of the enoyl reductase tenC. These enzymes catalyze the synthesis of the pyrrolidine-2-dione intermediates pretellinin A, 11-hydropretellenin A, 12-hydropretellenin A, 13-hydropretellenin A, 14-hydropretellenin A, 12-oxopretellenin A and prototellinin D. The cytochrome P450 monooxygenase tenA then catalyzes an oxidative ring expansion of pretenellin A and 14-hydropretellenin A to form the 2-pyridone core, leading to pretenellin B and pyridovericin, respectively. The cytochrome P450 monooxygenase tenB is then required for the selective N-hydroxylation of the 2-pyridone nitrogen of yield tellinin and 15-hydroxytellenin (15-HT), respectively. The UDP-glucosyltransferase GT1 and the methyltransferase MT1, located outside the tenS gene cluster, contribute to the stepwise glycosylation and methylation of 15-HT to obtain the glycoside pyridovericin-N-O-(4-O-methyl-beta-D-glucopyranoside) (PMGP). Additional related compounds such as 1-O-methyl-15-HT, (8Z)-1-O-methyl-15-HT, and O-methyltenellin A are also produced but the enzymes involved in their biosynthesis have still to be determined. The sequence is that of UDP-glucosyltransferase 1 from Beauveria bassiana (strain ARSEF 2860) (White muscardine disease fungus).